A 705-amino-acid chain; its full sequence is DNA polymerase alpha subunit B (705 aa).

Positions 115–199 (KKRKLHGPFS…TPTTSRQNVP (85 aa)) are disordered. A compositionally biased stretch (polar residues) spans 125 to 134 (LSDSKQTYNV). Phosphoserine is present on S126. The span at 181-197 (STFQTPTTNTPTTSRQN) shows a compositional bias: low complexity.

It belongs to the DNA polymerase alpha subunit B family. As to quaternary structure, DNA polymerase alpha:primase is a four subunit enzyme complex, which is assembled throughout the cell cycle, and consists of the two DNA polymerase subunits A POL1 and B POL12, and the DNA primase large PRI2 and small PRI1 subunits. Subunit B POL12 binds to subunit A POL1. In terms of processing, phosphorylated in a cell cycle-dependent manner.

The protein resides in the nucleus. Non-catalytic component of DNA polymerase alpha, which in a complex with DNA primase (DNA polymerase alpha:primase) constitutes a replicative polymerase. POL12 may play an essential role at the early stage of chromosomal DNA replication by coupling DNA polymerase alpha to the cellular replication machinery. Interacts with MCM10. This Saccharomyces cerevisiae (strain ATCC 204508 / S288c) (Baker's yeast) protein is DNA polymerase alpha subunit B (POL12).